The sequence spans 60 residues: Cytotoxin KJC3 (60 aa).

4 disulfides stabilise this stretch: C3/C21, C14/C38, C42/C53, and C54/C59.

It belongs to the three-finger toxin family. Short-chain subfamily. Type IA cytotoxin sub-subfamily. In terms of assembly, monomer in solution; Homodimer and oligomer in the presence of negatively charged lipids forming a pore with a size ranging between 20 and 30 Angstroms. As to expression, expressed by the venom gland.

Its subcellular location is the secreted. The protein localises to the target cell membrane. Functionally, shows cytolytic activity on many different cells by forming pore in lipid membranes. In vivo, increases heart rate or kills the animal by cardiac arrest. In addition, it binds to heparin with high affinity, interacts with Kv channel-interacting protein 1 (KCNIP1) in a calcium-independent manner, and binds to integrin alpha-V/beta-3 (ITGAV/ITGB3) with moderate affinity. The sequence is that of Cytotoxin KJC3 from Naja sputatrix (Malayan spitting cobra).